Consider the following 59-residue polypeptide: Transcription elongation factor Spt4 (59 aa).

Cys4, Cys7, Cys16, and Cys19 together coordinate Zn(2+).

Belongs to the archaeal Spt4 family. In terms of assembly, heterodimer composed of Spt4 and Spt5.

Its function is as follows. Stimulates transcription elongation. In Methanocaldococcus jannaschii (strain ATCC 43067 / DSM 2661 / JAL-1 / JCM 10045 / NBRC 100440) (Methanococcus jannaschii), this protein is Transcription elongation factor Spt4.